The following is a 243-amino-acid chain: Protein GID8 homolog (243 aa).

The 33-residue stretch at 40-72 folds into the LisH domain; that stretch reads RKEDMNTLVMNFLVTEGYVEAAEKFQRESGTKP. In terms of domain architecture, CTLH spans 78-135; that stretch reads TITDRMAVKKAVQNGNVEDAIEKVNDLNPEILDTNPELFFHLQQQRLIELIRQGKTEE.

The protein belongs to the GID8 family. In terms of assembly, interacts with RANBPM.

The protein localises to the cytoplasm. The chain is Protein GID8 homolog from Arabidopsis thaliana (Mouse-ear cress).